A 139-amino-acid polypeptide reads, in one-letter code: NADH-quinone oxidoreductase subunit A (139 aa).

3 consecutive transmembrane segments (helical) span residues leucine 11–leucine 31, leucine 70–isoleucine 90, and tryptophan 97–leucine 117.

It belongs to the complex I subunit 3 family. In terms of assembly, NDH-1 is composed of 14 different subunits. Subunits NuoA, H, J, K, L, M, N constitute the membrane sector of the complex.

The protein resides in the cell inner membrane. It catalyses the reaction a quinone + NADH + 5 H(+)(in) = a quinol + NAD(+) + 4 H(+)(out). NDH-1 shuttles electrons from NADH, via FMN and iron-sulfur (Fe-S) centers, to quinones in the respiratory chain. The immediate electron acceptor for the enzyme in this species is believed to be ubiquinone. Couples the redox reaction to proton translocation (for every two electrons transferred, four hydrogen ions are translocated across the cytoplasmic membrane), and thus conserves the redox energy in a proton gradient. In Methylococcus capsulatus (strain ATCC 33009 / NCIMB 11132 / Bath), this protein is NADH-quinone oxidoreductase subunit A.